Here is a 222-residue protein sequence, read N- to C-terminus: MEGLLQFLLAKIILLALASSFVYCYDPSPLQDYCVATNETNGVYVNGEFCKDPKRVTTNDFYTSGLNVPGNTIIGPGARNTVVDVERLPGLNTLGVDIARYDFAPGGLDPPHTHPRGSQIFLVMKGKLFVGFVSSNEYNYTLFTKVLYPGDVFVFPKGLIHFHANIGETNAVVISAGGSQDPGRIIIGDAVFGSKPLIDPKVLAKAFALDYNKVKYLQAVFS.

Residues 1-24 (MEGLLQFLLAKIILLALASSFVYC) form the signal peptide. A disulfide bond links C34 and C50. N38 is a glycosylation site (N-linked (GlcNAc...) asparagine). Residues 64 to 215 (SGLNVPGNTI…AFALDYNKVK (152 aa)) enclose the Cupin type-1 domain. Residues H112 and H114 each contribute to the Mn(2+) site. An N-linked (GlcNAc...) asparagine glycan is attached at N139. H161 lines the Mn(2+) pocket.

The protein belongs to the germin family. Oligomer (believed to be a pentamer but probably hexamer).

The protein localises to the secreted. It is found in the extracellular space. It localises to the apoplast. Its function is as follows. May play a role in plant defense. Probably has no oxalate oxidase activity even if the active site is conserved. The sequence is that of Germin-like protein subfamily 1 member 4 from Arabidopsis thaliana (Mouse-ear cress).